The following is a 310-amino-acid chain: Ribose-phosphate pyrophosphokinase (310 aa).

Residues 33 to 35 and 92 to 93 contribute to the ATP site; these read DGE and RQ. The Mg(2+) site is built by histidine 127 and aspartate 166. Residue lysine 189 is part of the active site. Residues arginine 191, aspartate 215, and 219-223 each bind D-ribose 5-phosphate; that span reads DTAGT.

The protein belongs to the ribose-phosphate pyrophosphokinase family. Class I subfamily. In terms of assembly, homohexamer. It depends on Mg(2+) as a cofactor.

The protein localises to the cytoplasm. It catalyses the reaction D-ribose 5-phosphate + ATP = 5-phospho-alpha-D-ribose 1-diphosphate + AMP + H(+). The protein operates within metabolic intermediate biosynthesis; 5-phospho-alpha-D-ribose 1-diphosphate biosynthesis; 5-phospho-alpha-D-ribose 1-diphosphate from D-ribose 5-phosphate (route I): step 1/1. Involved in the biosynthesis of the central metabolite phospho-alpha-D-ribosyl-1-pyrophosphate (PRPP) via the transfer of pyrophosphoryl group from ATP to 1-hydroxyl of ribose-5-phosphate (Rib-5-P). This chain is Ribose-phosphate pyrophosphokinase, found in Bordetella parapertussis (strain 12822 / ATCC BAA-587 / NCTC 13253).